A 372-amino-acid polypeptide reads, in one-letter code: 3-isopropylmalate dehydrogenase (372 aa).

79–90 (GPKWQGGAVRPE) lines the NAD(+) pocket. Substrate is bound by residues R97, R107, R136, and D225. Mg(2+) is bound by residues D225, D250, and D254. NAD(+) is bound at residue 289–300 (GSAPDLPAGKAN).

Belongs to the isocitrate and isopropylmalate dehydrogenases family. Homodimer. Mg(2+) serves as cofactor. It depends on Mn(2+) as a cofactor.

The protein localises to the cytoplasm. The catalysed reaction is (2R,3S)-3-isopropylmalate + NAD(+) = 4-methyl-2-oxopentanoate + CO2 + NADH. Its pathway is amino-acid biosynthesis; L-leucine biosynthesis; L-leucine from 3-methyl-2-oxobutanoate: step 3/4. Functionally, catalyzes the oxidation of 3-carboxy-2-hydroxy-4-methylpentanoate (3-isopropylmalate) to 3-carboxy-4-methyl-2-oxopentanoate. The product decarboxylates to 4-methyl-2 oxopentanoate. This is 3-isopropylmalate dehydrogenase (LEU2) from Eremothecium gossypii (strain ATCC 10895 / CBS 109.51 / FGSC 9923 / NRRL Y-1056) (Yeast).